The sequence spans 122 residues: Large ribosomal subunit protein uL14 (122 aa).

This sequence belongs to the universal ribosomal protein uL14 family. Part of the 50S ribosomal subunit. Forms a cluster with proteins L3 and L19. In the 70S ribosome, L14 and L19 interact and together make contacts with the 16S rRNA in bridges B5 and B8.

Functionally, binds to 23S rRNA. Forms part of two intersubunit bridges in the 70S ribosome. In Mycoplasmopsis pulmonis (strain UAB CTIP) (Mycoplasma pulmonis), this protein is Large ribosomal subunit protein uL14.